Here is a 490-residue protein sequence, read N- to C-terminus: WD repeat-containing protein JIP5 (490 aa).

7 WD repeats span residues 23 to 64 (KYND…ERMQ), 70 to 112 (QKKK…GSCR), 118 to 155 (PIESSVGKHLFTVGKDHVVKKANTETGKVLTKTDISKD), 157 to 196 (SSKDAVTKLCHSTTHPFLLSGTENGHVLVYDSNDLSNKFK), 242 to 284 (DQED…LMDQ), 286 to 327 (SRIK…HRVN), and 340 to 377 (GTADEVGFLDIDYEYRLLTAGMDSMKLWSAEGDDEEEE). The interval 368 to 490 (SAEGDDEEEE…SHGIRRFDGL (123 aa)) is disordered. Composition is skewed to acidic residues over residues 370 to 406 (EGDDEEEEESEGEESEESEESDEESDESSGEESEGDD) and 413 to 437 (EESDSNDEDEVESSDDEKEKEEEST). Over residues 438-448 (ETDHKNIEAES) the composition is skewed to basic and acidic residues. Residues 450 to 461 (KQANKRQASQPK) show a composition bias toward polar residues. The segment covering 469-484 (KQKLKQTSKLAHSHGI) has biased composition (basic residues).

This sequence belongs to the WD repeat WDR55 family.

It localises to the nucleus. The protein resides in the nucleolus. The protein is WD repeat-containing protein JIP5 (JIP5) of Meyerozyma guilliermondii (strain ATCC 6260 / CBS 566 / DSM 6381 / JCM 1539 / NBRC 10279 / NRRL Y-324) (Yeast).